A 452-amino-acid chain; its full sequence is Down-regulator of invasive growth 1 (452 aa).

Disordered stretches follow at residues 1 to 145 (MAVS…SAPA) and 262 to 311 (RNKR…ADLR). Polar residues-rich tracts occupy residues 12–22 (EDTSIAKSTQD) and 35–53 (KGSS…SVGQ). Residue S45 is modified to Phosphoserine. Residues 61–77 (PEEDDSGDKEADHEDSE) show a composition bias toward acidic residues. Residues 81 to 100 (AKKRKAQPLKNPKKSLKRGR) are compositionally biased toward basic residues. 4 stretches are compositionally biased toward polar residues: residues 107-116 (LSDSNTNTHG), 124-145 (LASS…SAPA), 269-281 (SYDS…ASTG), and 291-307 (RNSS…TQQR). 4 positions are modified to phosphoserine: S126, S142, S272, and S275. The segment at 212-452 (IPPPHMLNKP…KSSSHHRTGK (241 aa)) is interaction with FUS3 and KSS1. A Phosphoserine modification is found at S330. Over residues 331-348 (ANTKARSASTSTSTSTST) the composition is skewed to low complexity. The interval 331 to 395 (ANTKARSAST…QRTSQPQQQS (65 aa)) is disordered. Residues 349–361 (NRDRSSWHEAEPN) are compositionally biased toward basic and acidic residues. The span at 362-372 (KDEEEGTDLAI) shows a compositional bias: acidic residues. A compositionally biased stretch (low complexity) spans 378-395 (PTPTFTTFQRTSQPQQQS). T379 carries the phosphothreonine modification. Residues S395 and S428 each carry the phosphoserine modification.

Forms a complex with DIG2, STE12 and either FUS3 or KSS1. The interaction of FUS3 with STE12 depends on the presence of both DIG1 and DIG2. STE12 is lost from FUS3/DIG1/DIG2 complex after pheromone treatment. DIG1 and DIG2 have also been reported to interact with CLN1 and CLN2. Post-translationally, phosphorylated by FUS3 and KSS1, in a pheromone-stimulated manner. Phosphorylation reduces the affinity for STE12.

It is found in the nucleus. Functionally, DIG1 and DIG2 are negative regulators of the filamentation and pheromone induced mating program. DIG1 and DIG2 inhibit the transcriptional activity of STE12 by direct protein-protein interaction. DIG1 colocalizes to promoters with STE12 and redistributes with it during induction of filamentation (by butanol) or mating (by pheromone) to program specific genes, but binding of DIG1 to STE12 is reduced by pheromone treatment. This Saccharomyces cerevisiae (strain ATCC 204508 / S288c) (Baker's yeast) protein is Down-regulator of invasive growth 1 (DIG1).